Consider the following 185-residue polypeptide: MSETAYTPRLRAEYDQSIRSKLTEEFGYANVMQVPRLDKVVLNMGVGEAVNDRKKAEQAAADLGLIAGQKPIITFSRMAISTFKLRENQPIGCKVTLRKAKMYEFIDRLITVALPRVRDFRGLNPKSFDGRGNYSLGIKEHIIFPEIDFDKMGETWGMDITVCTTAKTDDEARALLTAFNFPFRQ.

It belongs to the universal ribosomal protein uL5 family. As to quaternary structure, part of the 50S ribosomal subunit; part of the 5S rRNA/L5/L18/L25 subcomplex. Contacts the 5S rRNA and the P site tRNA. Forms a bridge to the 30S subunit in the 70S ribosome.

This is one of the proteins that bind and probably mediate the attachment of the 5S RNA into the large ribosomal subunit, where it forms part of the central protuberance. In the 70S ribosome it contacts protein S13 of the 30S subunit (bridge B1b), connecting the 2 subunits; this bridge is implicated in subunit movement. Contacts the P site tRNA; the 5S rRNA and some of its associated proteins might help stabilize positioning of ribosome-bound tRNAs. This chain is Large ribosomal subunit protein uL5, found in Rhodopseudomonas palustris (strain BisA53).